The following is a 212-amino-acid chain: Glycerol-3-phosphate acyltransferase (212 aa).

5 helical membrane passes run 3–23 (IIIM…LWIG), 70–90 (IPII…FAII), 110–130 (AGVL…IFLL), 143–163 (ITVA…GFIL), and 164–184 (TDYD…IIIR).

It belongs to the PlsY family. As to quaternary structure, probably interacts with PlsX.

It localises to the cell membrane. The catalysed reaction is an acyl phosphate + sn-glycerol 3-phosphate = a 1-acyl-sn-glycero-3-phosphate + phosphate. Its pathway is lipid metabolism; phospholipid metabolism. In terms of biological role, catalyzes the transfer of an acyl group from acyl-phosphate (acyl-PO(4)) to glycerol-3-phosphate (G3P) to form lysophosphatidic acid (LPA). This enzyme utilizes acyl-phosphate as fatty acyl donor, but not acyl-CoA or acyl-ACP. This Streptococcus agalactiae serotype III (strain NEM316) protein is Glycerol-3-phosphate acyltransferase.